A 262-amino-acid chain; its full sequence is 5'-nucleotidase SurE (262 aa).

Residues Asp-8, Asp-9, Ser-39, and Asn-95 each coordinate a divalent metal cation.

Belongs to the SurE nucleotidase family. It depends on a divalent metal cation as a cofactor.

The protein localises to the cytoplasm. The catalysed reaction is a ribonucleoside 5'-phosphate + H2O = a ribonucleoside + phosphate. Functionally, nucleotidase that shows phosphatase activity on nucleoside 5'-monophosphates. The sequence is that of 5'-nucleotidase SurE from Methanothermobacter thermautotrophicus (strain ATCC 29096 / DSM 1053 / JCM 10044 / NBRC 100330 / Delta H) (Methanobacterium thermoautotrophicum).